Reading from the N-terminus, the 429-residue chain is Glutamyl-tRNA reductase (429 aa).

Substrate is bound by residues 56-59, Ser-119, 124-126, and Gln-130; these read TCNR and EPQ. The Nucleophile role is filled by Cys-57. NADP(+) is bound at residue 199–204; it reads GAGEMI.

The protein belongs to the glutamyl-tRNA reductase family. As to quaternary structure, homodimer.

The enzyme catalyses (S)-4-amino-5-oxopentanoate + tRNA(Glu) + NADP(+) = L-glutamyl-tRNA(Glu) + NADPH + H(+). It participates in porphyrin-containing compound metabolism; protoporphyrin-IX biosynthesis; 5-aminolevulinate from L-glutamyl-tRNA(Glu): step 1/2. Functionally, catalyzes the NADPH-dependent reduction of glutamyl-tRNA(Glu) to glutamate 1-semialdehyde (GSA). In Janthinobacterium sp. (strain Marseille) (Minibacterium massiliensis), this protein is Glutamyl-tRNA reductase.